A 230-amino-acid chain; its full sequence is Large ribosomal subunit protein uL1c (230 aa).

It belongs to the universal ribosomal protein uL1 family. Part of the 50S ribosomal subunit.

It is found in the plastid. The protein localises to the chloroplast. Binds directly to 23S rRNA. Might be involved in E site tRNA release (Potential). The chain is Large ribosomal subunit protein uL1c (rpl1) from Thalassiosira pseudonana (Marine diatom).